The sequence spans 133 residues: Small ribosomal subunit protein uS8 (133 aa).

This sequence belongs to the universal ribosomal protein uS8 family. As to quaternary structure, part of the 30S ribosomal subunit. Contacts proteins S5 and S12.

Its function is as follows. One of the primary rRNA binding proteins, it binds directly to 16S rRNA central domain where it helps coordinate assembly of the platform of the 30S subunit. This chain is Small ribosomal subunit protein uS8, found in Chlamydia trachomatis serovar A (strain ATCC VR-571B / DSM 19440 / HAR-13).